A 415-amino-acid chain; its full sequence is uncharacterized protein (415 aa).

[4Fe-4S] cluster is bound by residues Cys-85, Cys-91, Cys-94, and Cys-175. S-adenosyl-L-methionine is bound by residues Gln-248, Tyr-276, Glu-297, and Asn-344. Cys-371 (nucleophile) is an active-site residue.

It belongs to the class I-like SAM-binding methyltransferase superfamily. RNA M5U methyltransferase family.

This is an uncharacterized protein from Leptospira interrogans serogroup Icterohaemorrhagiae serovar Lai (strain 56601).